A 225-amino-acid chain; its full sequence is Transmembrane protein C16orf54 homolog (225 aa).

A helical transmembrane segment spans residues 34 to 54 (IPIMLGLASLTAFFIITTAVL). Residues 107 to 149 (RAPDPPTPGGTLEGRATAPPAIPTPHPSPSSLVPQTPPEVPAQ) form a disordered region. Residues Thr113 and Thr117 each carry the phosphothreonine modification. Ser195 bears the Phosphoserine mark.

It is found in the membrane. This is Transmembrane protein C16orf54 homolog from Rattus norvegicus (Rat).